A 781-amino-acid chain; its full sequence is DEAD-box ATP-dependent RNA helicase 50 (781 aa).

Disordered stretches follow at residues 72–103 (EFAP…LTAS), 117–148 (GKVT…DEGF), 166–240 (IPRS…KGDR), 254–292 (GRAI…REDR), and 313–342 (YNPR…RGWG). Low complexity predominate over residues 79–88 (SDLLSSIPSE). Acidic residues predominate over residues 130–143 (EEEDEDDASDENYS). Over residues 171-197 (KSAERNEVKRASKVRESRESRRDLDRL) the composition is skewed to basic and acidic residues. Residues 198 to 208 (EGDDEDVDEVS) are compositionally biased toward acidic residues. The segment covering 216–226 (NQRAGSRSSYS) has biased composition (polar residues). The segment covering 254–274 (GRAIDEVSNPRKFNDNERAES) has biased composition (basic and acidic residues). Positions 275–286 (RSSYSRDSSANS) are enriched in low complexity. A compositionally biased stretch (basic and acidic residues) spans 313-325 (YNPRRFTDNERGL). The Q motif signature appears at 374 to 402 (KTFAEIGCSEDMMKALKEQNFDRPAHIQA). Positions 405-586 (FSPVIDGKSC…VEVFPDCEVV (182 aa)) constitute a Helicase ATP-binding domain. 418 to 425 (DQSGSGKT) provides a ligand contact to ATP. The DEAD box motif lies at 533-536 (DEVD). Residues 621–781 (NKKTALLQIM…DVPNAYEFTT (161 aa)) enclose the Helicase C-terminal domain.

The protein belongs to the DEAD box helicase family.

It catalyses the reaction ATP + H2O = ADP + phosphate + H(+). Functionally, probably involved in resistance to biotic and abiotic stresses. This is DEAD-box ATP-dependent RNA helicase 50 (RH50) from Arabidopsis thaliana (Mouse-ear cress).